A 3582-amino-acid chain; its full sequence is Ubiquitin carboxyl-terminal hydrolase 34 (3582 aa).

4 positions are modified to phosphoserine: Ser352, Ser486, Ser487, and Ser490. 5 disordered regions span residues 503-533 (EEEE…HQSG), 551-670 (QQRL…ELRN), 682-705 (GESQ…VFNT), 775-801 (HHHH…DGHM), and 1496-1515 (TGSY…DQVE). Over residues 510-524 (AAPSPWSPAASPQSS) the composition is skewed to low complexity. The span at 560–570 (SMQGSSDETAN) shows a compositional bias: polar residues. The span at 571–590 (SGEDGSSGPGSSSGHSDGSS) shows a compositional bias: low complexity. A compositionally biased stretch (polar residues) spans 591–609 (NEVNSSHASQSAGSPGSEV). The span at 610-653 (QSEDIADIEALKEEEEEEEEEEEEEEEEDDEEEEDEEEDDDDDD) shows a compositional bias: acidic residues. Over residues 684–697 (SQGTSERNGTNSGT) the composition is skewed to polar residues. Positions 775-798 (HHHHHHHHHHHHHHHHHHHHHHHD) are enriched in basic residues. A compositionally biased stretch (acidic residues) spans 1504 to 1514 (PDSDDSSEDQV). At Ser1506 the chain carries Phosphoserine. The 346-residue stretch at 1931 to 2276 (VGLTNLGATC…SAYMLFYKRM (346 aa)) folds into the USP domain. Cys1940 functions as the Nucleophile in the catalytic mechanism. His2201 functions as the Proton acceptor in the catalytic mechanism. Residue Ser2525 is modified to Phosphoserine. The segment at 3369-3484 (SLQEQEAKER…QSNNGRFDDC (116 aa)) is disordered. The segment covering 3373–3384 (QEAKERKTKDDE) has biased composition (basic and acidic residues). A phosphoserine mark is found at Ser3395 and Ser3396. Position 3418 is a phosphothreonine (Thr3418). Ser3423 and Ser3443 each carry phosphoserine. Positions 3463 to 3484 (DGSHIRSQHAEEQSNNGRFDDC) are enriched in basic and acidic residues. Ser3539 carries the phosphoserine modification.

It belongs to the peptidase C19 family. Interacts with AXIN1 and AXIN2.

It catalyses the reaction Thiol-dependent hydrolysis of ester, thioester, amide, peptide and isopeptide bonds formed by the C-terminal Gly of ubiquitin (a 76-residue protein attached to proteins as an intracellular targeting signal).. Functionally, ubiquitin hydrolase that can remove conjugated ubiquitin from AXIN1 and AXIN2, thereby acting as a regulator of Wnt signaling pathway. Acts as an activator of the Wnt signaling pathway downstream of the beta-catenin destruction complex by deubiquitinating and stabilizing AXIN1 and AXIN2, leading to promote nuclear accumulation of AXIN1 and AXIN2 and positively regulate beta-catenin (CTNBB1)-mediated transcription. Recognizes and hydrolyzes the peptide bond at the C-terminal Gly of ubiquitin. Involved in the processing of poly-ubiquitin precursors as well as that of ubiquitinated proteins. The protein is Ubiquitin carboxyl-terminal hydrolase 34 (Usp34) of Mus musculus (Mouse).